The sequence spans 264 residues: tRNA pseudouridine synthase A (264 aa).

The active-site Nucleophile is aspartate 51. Tyrosine 109 contacts substrate.

Belongs to the tRNA pseudouridine synthase TruA family. Homodimer.

It carries out the reaction uridine(38/39/40) in tRNA = pseudouridine(38/39/40) in tRNA. Formation of pseudouridine at positions 38, 39 and 40 in the anticodon stem and loop of transfer RNAs. The chain is tRNA pseudouridine synthase A from Aromatoleum aromaticum (strain DSM 19018 / LMG 30748 / EbN1) (Azoarcus sp. (strain EbN1)).